The sequence spans 450 residues: Tubulin alpha-3C chain (450 aa).

The MREC motif signature appears at 1 to 4; sequence MREC. Position 11 (Gln-11) interacts with GTP. The residue at position 40 (Lys-40) is an N6-acetyllysine. GTP is bound by residues Glu-71, Ser-140, Gly-144, Thr-145, Thr-179, Asn-206, and Asn-228. Residue Glu-71 participates in Mg(2+) binding. Residue Glu-254 is part of the active site. Tyr-282 is modified (3'-nitrotyrosine). Ser-439 is subject to Phosphoserine. At Tyr-450 the chain carries 3'-nitrotyrosine.

It belongs to the tubulin family. In terms of assembly, dimer of alpha and beta chains. A typical microtubule is a hollow water-filled tube with an outer diameter of 25 nm and an inner diameter of 15 nM. Alpha-beta heterodimers associate head-to-tail to form protofilaments running lengthwise along the microtubule wall with the beta-tubulin subunit facing the microtubule plus end conferring a structural polarity. Microtubules usually have 13 protofilaments but different protofilament numbers can be found in some organisms and specialized cells. Mg(2+) is required as a cofactor. Some glutamate residues at the C-terminus are polyglutamylated, resulting in polyglutamate chains on the gamma-carboxyl group. Polyglutamylation plays a key role in microtubule severing by spastin (SPAST). SPAST preferentially recognizes and acts on microtubules decorated with short polyglutamate tails: severing activity by SPAST increases as the number of glutamates per tubulin rises from one to eight, but decreases beyond this glutamylation threshold. Glutamylation is also involved in cilia motility. Post-translationally, some glutamate residues at the C-terminus are monoglycylated but not polyglycylated due to the absence of functional TTLL10 in human. Monoglycylation is mainly limited to tubulin incorporated into cilia and flagella axonemes, which is required for their stability and maintenance. Flagella glycylation controls sperm motility. Both polyglutamylation and monoglycylation can coexist on the same protein on adjacent residues, and lowering glycylation levels increases polyglutamylation, and reciprocally. In terms of processing, acetylation of alpha chains at Lys-40 is located inside the microtubule lumen. This modification has been correlated with increased microtubule stability, intracellular transport and ciliary assembly. Methylation of alpha chains at Lys-40 is found in mitotic microtubules and is required for normal mitosis and cytokinesis contributing to genomic stability. Post-translationally, nitration of Tyr-450 is irreversible and interferes with normal dynein intracellular distribution. In terms of processing, undergoes a tyrosination/detyrosination cycle, the cyclic removal and re-addition of a C-terminal tyrosine residue by the enzymes tubulin tyrosine carboxypeptidase (MATCAP1/KIAA0895L, VASH1 or VASH2) and tubulin tyrosine ligase (TTL), respectively. Tyrosination promotes microtubule interaction with CAP-Gly domain-containing proteins such as CLIP1, CLIP2 and DCTN1. Tyrosination regulates the initiation of dynein-dynactin motility via interaction with DCTN1, which brings the dynein-dynactin complex into contact with microtubules. In neurons, tyrosinated tubulins mediate the initiation of retrograde vesicle transport. Post-translationally, detyrosination is involved in metaphase plate congression by guiding chromosomes during mitosis: detyrosination promotes interaction with CENPE, promoting pole-proximal transport of chromosomes toward the equator. Detyrosination increases microtubules-dependent mechanotransduction in dystrophic cardiac and skeletal muscle. In cardiomyocytes, detyrosinated microtubules are required to resist to contractile compression during contraction: detyrosination promotes association with desmin (DES) at force-generating sarcomeres, leading to buckled microtubules and mechanical resistance to contraction. In terms of tissue distribution, expressed in testis.

It localises to the cytoplasm. It is found in the cytoskeleton. The catalysed reaction is GTP + H2O = GDP + phosphate + H(+). Functionally, tubulin is the major constituent of microtubules, a cylinder consisting of laterally associated linear protofilaments composed of alpha- and beta-tubulin heterodimers. Microtubules grow by the addition of GTP-tubulin dimers to the microtubule end, where a stabilizing cap forms. Below the cap, tubulin dimers are in GDP-bound state, owing to GTPase activity of alpha-tubulin. The chain is Tubulin alpha-3C chain (TUBA3C) from Homo sapiens (Human).